Here is a 275-residue protein sequence, read N- to C-terminus: Trypsin-4 (275 aa).

Positions 1–18 (MSNKITILLAVLLAVVAC) are cleaved as a signal peptide. The propeptide at 19–48 (AQAHASHQRRVPYPLPRFLPRPHHTVSNHR) is activation peptide. One can recognise a Peptidase S1 domain in the interval 49–274 (IVGGFEIDVA…VRDWIRETCG (226 aa)). Cys74 and Cys90 are oxidised to a cystine. Active-site charge relay system residues include His89 and Asp134. 2 disulfides stabilise this stretch: Cys199–Cys215 and Cys226–Cys250. Ser230 functions as the Charge relay system in the catalytic mechanism.

Belongs to the peptidase S1 family. Expressed in the midgut. Expression levels drop a few hours after blood feeding and pick up again 28 hours later.

It localises to the secreted. The catalysed reaction is Preferential cleavage: Arg-|-Xaa, Lys-|-Xaa.. Functionally, constitutive trypsin that is expressed 2 days after emergence, coinciding with host seeking behavior of the female. This chain is Trypsin-4 (TRYP4), found in Anopheles gambiae (African malaria mosquito).